Reading from the N-terminus, the 313-residue chain is Pyrimidine-specific ribonucleoside hydrolase RihB (313 aa).

Aspartate 11 acts as the Proton acceptor in catalysis. Ca(2+) is bound by residues aspartate 11, aspartate 16, and valine 124. Substrate is bound by residues glutamine 227 and histidine 239. Aspartate 240 serves as a coordination point for Ca(2+).

The protein belongs to the IUNH family. RihB subfamily. In terms of assembly, homotetramer. The cofactor is Ca(2+).

The enzyme catalyses a pyrimidine ribonucleoside + H2O = a pyrimidine nucleobase + D-ribose. Functionally, hydrolyzes cytidine or uridine to ribose and cytosine or uracil, respectively. Has a clear preference for cytidine over uridine. Strictly specific for ribonucleosides. The sequence is that of Pyrimidine-specific ribonucleoside hydrolase RihB from Escherichia coli (strain SMS-3-5 / SECEC).